The chain runs to 185 residues: Threonylcarbamoyl-AMP synthase (185 aa).

Residues Ser-4 to Ala-185 enclose the YrdC-like domain.

The protein belongs to the SUA5 family. TsaC subfamily.

It localises to the cytoplasm. The catalysed reaction is L-threonine + hydrogencarbonate + ATP = L-threonylcarbamoyladenylate + diphosphate + H2O. In terms of biological role, required for the formation of a threonylcarbamoyl group on adenosine at position 37 (t(6)A37) in tRNAs that read codons beginning with adenine. Catalyzes the conversion of L-threonine, HCO(3)(-)/CO(2) and ATP to give threonylcarbamoyl-AMP (TC-AMP) as the acyladenylate intermediate, with the release of diphosphate. This chain is Threonylcarbamoyl-AMP synthase, found in Pseudomonas paraeruginosa (strain DSM 24068 / PA7) (Pseudomonas aeruginosa (strain PA7)).